Reading from the N-terminus, the 232-residue chain is Phosphatidylserine decarboxylase proenzyme (232 aa).

Ser-190 acts as the Schiff-base intermediate with substrate; via pyruvic acid in catalysis. Residue Ser-190 is modified to Pyruvic acid (Ser); by autocatalysis.

This sequence belongs to the phosphatidylserine decarboxylase family. PSD-A subfamily. In terms of assembly, heterodimer of a large membrane-associated beta subunit and a small pyruvoyl-containing alpha subunit. Pyruvate is required as a cofactor. Post-translationally, is synthesized initially as an inactive proenzyme. Formation of the active enzyme involves a self-maturation process in which the active site pyruvoyl group is generated from an internal serine residue via an autocatalytic post-translational modification. Two non-identical subunits are generated from the proenzyme in this reaction, and the pyruvate is formed at the N-terminus of the alpha chain, which is derived from the carboxyl end of the proenzyme. The post-translation cleavage follows an unusual pathway, termed non-hydrolytic serinolysis, in which the side chain hydroxyl group of the serine supplies its oxygen atom to form the C-terminus of the beta chain, while the remainder of the serine residue undergoes an oxidative deamination to produce ammonia and the pyruvoyl prosthetic group on the alpha chain.

It localises to the cell membrane. It carries out the reaction a 1,2-diacyl-sn-glycero-3-phospho-L-serine + H(+) = a 1,2-diacyl-sn-glycero-3-phosphoethanolamine + CO2. Its pathway is phospholipid metabolism; phosphatidylethanolamine biosynthesis; phosphatidylethanolamine from CDP-diacylglycerol: step 2/2. Its function is as follows. Catalyzes the formation of phosphatidylethanolamine (PtdEtn) from phosphatidylserine (PtdSer). The chain is Phosphatidylserine decarboxylase proenzyme from Afipia carboxidovorans (strain ATCC 49405 / DSM 1227 / KCTC 32145 / OM5) (Oligotropha carboxidovorans).